The following is a 210-amino-acid chain: Endonuclease III (210 aa).

The HhH domain occupies 108–127 (RIELESLPGVGRKTANIILN). [4Fe-4S] cluster contacts are provided by C187, C194, C197, and C203.

This sequence belongs to the Nth/MutY family. [4Fe-4S] cluster serves as cofactor.

The enzyme catalyses 2'-deoxyribonucleotide-(2'-deoxyribose 5'-phosphate)-2'-deoxyribonucleotide-DNA = a 3'-end 2'-deoxyribonucleotide-(2,3-dehydro-2,3-deoxyribose 5'-phosphate)-DNA + a 5'-end 5'-phospho-2'-deoxyribonucleoside-DNA + H(+). In terms of biological role, DNA repair enzyme that has both DNA N-glycosylase activity and AP-lyase activity. The DNA N-glycosylase activity releases various damaged pyrimidines from DNA by cleaving the N-glycosidic bond, leaving an AP (apurinic/apyrimidinic) site. The AP-lyase activity cleaves the phosphodiester bond 3' to the AP site by a beta-elimination, leaving a 3'-terminal unsaturated sugar and a product with a terminal 5'-phosphate. This Buchnera aphidicola subsp. Acyrthosiphon pisum (strain APS) (Acyrthosiphon pisum symbiotic bacterium) protein is Endonuclease III.